The following is a 395-amino-acid chain: L-rhamnonate dehydratase (395 aa).

Substrate contacts are provided by His-23 and Arg-49. The Mg(2+) site is built by Asp-215, Glu-241, and Glu-269. His-319 (proton acceptor) is an active-site residue. Substrate is bound at residue Glu-339.

The protein belongs to the mandelate racemase/muconate lactonizing enzyme family. RhamD subfamily. As to quaternary structure, homooctamer; tetramer of dimers. Mg(2+) serves as cofactor.

The enzyme catalyses L-rhamnonate = 2-dehydro-3-deoxy-L-rhamnonate + H2O. Catalyzes the dehydration of L-rhamnonate to 2-keto-3-deoxy-L-rhamnonate (KDR). The chain is L-rhamnonate dehydratase from Delftia acidovorans (strain DSM 14801 / SPH-1).